We begin with the raw amino-acid sequence, 362 residues long: Adenosine deaminase (362 aa).

The Zn(2+) site is built by His-19 and His-21. 3 residues coordinate substrate: His-21, Asp-23, and Gly-181. Position 208 (His-208) interacts with Zn(2+). Glu-211 functions as the Proton donor in the catalytic mechanism. Zn(2+) is bound at residue Asp-300.

The protein belongs to the metallo-dependent hydrolases superfamily. Adenosine and AMP deaminases family. Adenosine deaminase subfamily. Zn(2+) is required as a cofactor.

The enzyme catalyses adenosine + H2O + H(+) = inosine + NH4(+). It carries out the reaction 2'-deoxyadenosine + H2O + H(+) = 2'-deoxyinosine + NH4(+). Its function is as follows. Catalyzes the hydrolytic deamination of adenosine and 2-deoxyadenosine. The polypeptide is Adenosine deaminase (Mycolicibacterium vanbaalenii (strain DSM 7251 / JCM 13017 / BCRC 16820 / KCTC 9966 / NRRL B-24157 / PYR-1) (Mycobacterium vanbaalenii)).